The primary structure comprises 889 residues: Terminal uridylyltransferase 3 (889 aa).

Residues 123-151 form a C2H2-type; atypical zinc finger; the sequence is VRCDLCAKMIESRDEEQIQEHFQVHHAAL. 4 residues coordinate Zn(2+): Cys125, Cys128, His143, and His148. UTP contacts are provided by residues Ser225 and 236-239; that span reads SDAD. Residues Asp237 and Asp239 each contribute to the Mg(2+) site. An RNA-binding site is contributed by Arg286. UTP is bound by residues 394–398, Lys419, Lys423, and 437–438; these read GVRNS and SY. The PAP-associated domain occupies 505–572; it reads LGGLIPLFFL…LCIDDPYEDN (68 aa). The Nucleotide recognition motif (NRM) signature appears at 565 to 574; sequence IDDPYEDNFN. Disordered regions lie at residues 675-702 and 829-849; these read NNKS…HVES and RKKS…NHAG. The span at 829 to 846 shows a compositional bias: basic residues; the sequence is RKKSKGSKKRKNAVRRGN.

Belongs to the DNA polymerase type-B-like family. Mg(2+) is required as a cofactor. It depends on Mn(2+) as a cofactor.

Its subcellular location is the cytoplasm. The enzyme catalyses RNA(n) + UTP = RNA(n)-3'-uridine ribonucleotide + diphosphate. Functionally, terminal uridylyltransferase which catalyzes the addition of Us to the 3'-hydroxyl group of single-stranded RNAs. Does not mediate RNA-independent UTP polymerization. The chain is Terminal uridylyltransferase 3 from Trypanosoma brucei brucei.